A 117-amino-acid polypeptide reads, in one-letter code: MDLIQTLEQEEIARLNKTIPAFAPGDTVIVSVNVVEGTRKRLQAYEGVVIAKRNRGLNSSFIVRKISSGEGVERTFQLYSPLIASIEVKRRGDVRRAKLYYLRQRSGKSARIKEKLA.

This sequence belongs to the bacterial ribosomal protein bL19 family.

Functionally, this protein is located at the 30S-50S ribosomal subunit interface and may play a role in the structure and function of the aminoacyl-tRNA binding site. This Methylibium petroleiphilum (strain ATCC BAA-1232 / LMG 22953 / PM1) protein is Large ribosomal subunit protein bL19.